The chain runs to 285 residues: Pantothenate synthetase (285 aa).

An ATP-binding site is contributed by 30–37; sequence MGNLHDGH. His37 (proton donor) is an active-site residue. Gln61 is a (R)-pantoate binding site. Gln61 is a beta-alanine binding site. 149 to 152 contributes to the ATP binding site; sequence GEKD. Gln155 contacts (R)-pantoate. Residues Ile178 and 186-189 each bind ATP; that span reads LSSR.

This sequence belongs to the pantothenate synthetase family. Homodimer.

It is found in the cytoplasm. It carries out the reaction (R)-pantoate + beta-alanine + ATP = (R)-pantothenate + AMP + diphosphate + H(+). Its pathway is cofactor biosynthesis; (R)-pantothenate biosynthesis; (R)-pantothenate from (R)-pantoate and beta-alanine: step 1/1. Catalyzes the condensation of pantoate with beta-alanine in an ATP-dependent reaction via a pantoyl-adenylate intermediate. The protein is Pantothenate synthetase of Buchnera aphidicola subsp. Acyrthosiphon pisum (strain Tuc7).